Reading from the N-terminus, the 153-residue chain is Ribonuclease H (153 aa).

The 141-residue stretch at methionine 1–glutamate 141 folds into the RNase H type-1 domain. Mg(2+) contacts are provided by aspartate 9, glutamate 47, aspartate 69, and aspartate 133.

This sequence belongs to the RNase H family. In terms of assembly, monomer. Mg(2+) is required as a cofactor.

It is found in the cytoplasm. The catalysed reaction is Endonucleolytic cleavage to 5'-phosphomonoester.. Its function is as follows. Endonuclease that specifically degrades the RNA of RNA-DNA hybrids. This chain is Ribonuclease H, found in Psychromonas ingrahamii (strain DSM 17664 / CCUG 51855 / 37).